An 866-amino-acid chain; its full sequence is Probable beta-glucosidase F (866 aa).

The N-terminal stretch at 1-20 (MAAFPAYLALLSYLVPGALS) is a signal peptide. Asn-65, Asn-73, and Asn-257 each carry an N-linked (GlcNAc...) asparagine glycan. Asp-285 is an active-site residue. 8 N-linked (GlcNAc...) asparagine glycosylation sites follow: Asn-328, Asn-360, Asn-395, Asn-421, Asn-474, Asn-659, Asn-664, and Asn-724. The tract at residues 725-748 (SSKTYPYPDGYTTEPKPAPRAGGA) is disordered.

Belongs to the glycosyl hydrolase 3 family.

It localises to the secreted. The enzyme catalyses Hydrolysis of terminal, non-reducing beta-D-glucosyl residues with release of beta-D-glucose.. The protein operates within glycan metabolism; cellulose degradation. In terms of biological role, beta-glucosidases are one of a number of cellulolytic enzymes involved in the degradation of cellulosic biomass. Catalyzes the last step releasing glucose from the inhibitory cellobiose. The sequence is that of Probable beta-glucosidase F (bglF) from Aspergillus flavus (strain ATCC 200026 / FGSC A1120 / IAM 13836 / NRRL 3357 / JCM 12722 / SRRC 167).